Consider the following 315-residue polypeptide: tRNA uridine(34) hydroxylase (315 aa).

Residues 145 to 235 (MKNDFILVDM…GIIEYVNFIK (91 aa)) enclose the Rhodanese domain. The active-site Cysteine persulfide intermediate is the Cys-199.

It belongs to the TrhO family.

The enzyme catalyses uridine(34) in tRNA + AH2 + O2 = 5-hydroxyuridine(34) in tRNA + A + H2O. In terms of biological role, catalyzes oxygen-dependent 5-hydroxyuridine (ho5U) modification at position 34 in tRNAs. In Wigglesworthia glossinidia brevipalpis, this protein is tRNA uridine(34) hydroxylase.